We begin with the raw amino-acid sequence, 321 residues long: Mas-related G-protein coupled receptor member B4 (321 aa).

The Extracellular portion of the chain corresponds to 1 to 33 (MGTTTLAWNINNTAENGSYTEMFSCITKFNTLN). Asparagine 11 and asparagine 16 each carry an N-linked (GlcNAc...) asparagine glycan. A helical transmembrane segment spans residues 34-54 (FLTVIIAVVGLAGNGIVLWLL). Residues 55 to 62 (AFHLHRNA) are Cytoplasmic-facing. A helical membrane pass occupies residues 63–83 (FSVYVLNLAGADFLYLFTQVV). The Extracellular portion of the chain corresponds to 84 to 97 (HSLECVLQLDNNSF). An N-linked (GlcNAc...) asparagine glycan is attached at asparagine 94. The chain crosses the membrane as a helical span at residues 98-118 (YILLIVTMFAYLAGLCMIAAI). Topologically, residues 119–146 (SAERCLSVMWPIWYHCQRPRHTSAIMCA) are cytoplasmic. The chain crosses the membrane as a helical span at residues 147 to 167 (LVWVSSLLLSLVVGLGCGFLF). Residues 168-172 (SYYDY) are Extracellular-facing. Residues 173–193 (YFCITLNFITAAFLIVLSVVL) form a helical membrane-spanning segment. Residues 194–215 (SVSSLALLVKIVWGSHRIPVTR) lie on the Cytoplasmic side of the membrane. A helical membrane pass occupies residues 216–236 (FFVTIALTVVVFIYFGMPFGI). Over 237 to 257 (CWFLLSRIMEFDSIFFNNVYE) the chain is Extracellular. Residues 258–278 (IIEFLSCVNSCANPIIYFLVG) traverse the membrane as a helical segment. Over 279–321 (SIRQHRLRWQSLKLLLQRAMQDTPEEESGERGPSQRSGELETV) the chain is Cytoplasmic. The disordered stretch occupies residues 299 to 321 (QDTPEEESGERGPSQRSGELETV).

This sequence belongs to the G-protein coupled receptor 1 family. Mas subfamily.

Its subcellular location is the membrane. Functionally, orphan receptor. Probably involved in the function of nociceptive neurons. May regulate nociceptor function and/or development, including the sensation or modulation of pain. This is Mas-related G-protein coupled receptor member B4 (Mrgprb4) from Mus musculus (Mouse).